Here is a 330-residue protein sequence, read N- to C-terminus: Methionyl-tRNA formyltransferase (330 aa).

A (6S)-5,6,7,8-tetrahydrofolate-binding site is contributed by 121-124 (SLLP).

Belongs to the Fmt family.

The catalysed reaction is L-methionyl-tRNA(fMet) + (6R)-10-formyltetrahydrofolate = N-formyl-L-methionyl-tRNA(fMet) + (6S)-5,6,7,8-tetrahydrofolate + H(+). Functionally, attaches a formyl group to the free amino group of methionyl-tRNA(fMet). The formyl group appears to play a dual role in the initiator identity of N-formylmethionyl-tRNA by promoting its recognition by IF2 and preventing the misappropriation of this tRNA by the elongation apparatus. This Burkholderia cenocepacia (strain HI2424) protein is Methionyl-tRNA formyltransferase.